Here is a 156-residue protein sequence, read N- to C-terminus: ATP synthase subunit b (156 aa).

A helical transmembrane segment spans residues 7–27; that stretch reads LFVQAIVFLILVLFTMKFVWP.

The protein belongs to the ATPase B chain family. F-type ATPases have 2 components, F(1) - the catalytic core - and F(0) - the membrane proton channel. F(1) has five subunits: alpha(3), beta(3), gamma(1), delta(1), epsilon(1). F(0) has three main subunits: a(1), b(2) and c(10-14). The alpha and beta chains form an alternating ring which encloses part of the gamma chain. F(1) is attached to F(0) by a central stalk formed by the gamma and epsilon chains, while a peripheral stalk is formed by the delta and b chains.

It is found in the cell inner membrane. F(1)F(0) ATP synthase produces ATP from ADP in the presence of a proton or sodium gradient. F-type ATPases consist of two structural domains, F(1) containing the extramembraneous catalytic core and F(0) containing the membrane proton channel, linked together by a central stalk and a peripheral stalk. During catalysis, ATP synthesis in the catalytic domain of F(1) is coupled via a rotary mechanism of the central stalk subunits to proton translocation. In terms of biological role, component of the F(0) channel, it forms part of the peripheral stalk, linking F(1) to F(0). This Acidovorax sp. (strain JS42) protein is ATP synthase subunit b.